A 213-amino-acid polypeptide reads, in one-letter code: Probable transaldolase (213 aa).

Lysine 83 (schiff-base intermediate with substrate) is an active-site residue.

It belongs to the transaldolase family. Type 3B subfamily.

The protein localises to the cytoplasm. The enzyme catalyses D-sedoheptulose 7-phosphate + D-glyceraldehyde 3-phosphate = D-erythrose 4-phosphate + beta-D-fructose 6-phosphate. Its pathway is carbohydrate degradation; pentose phosphate pathway; D-glyceraldehyde 3-phosphate and beta-D-fructose 6-phosphate from D-ribose 5-phosphate and D-xylulose 5-phosphate (non-oxidative stage): step 2/3. Transaldolase is important for the balance of metabolites in the pentose-phosphate pathway. The sequence is that of Probable transaldolase from Desulfitobacterium hafniense (strain DSM 10664 / DCB-2).